The primary structure comprises 104 residues: Large ribosomal subunit protein bL21 (104 aa).

Belongs to the bacterial ribosomal protein bL21 family. As to quaternary structure, part of the 50S ribosomal subunit. Contacts protein L20.

In terms of biological role, this protein binds to 23S rRNA in the presence of protein L20. This is Large ribosomal subunit protein bL21 from Streptococcus sanguinis (strain SK36).